The following is an 831-amino-acid chain: Periplasmic nitrate reductase (831 aa).

Positions 1 to 29 (MTLTRRDLIKAQAAATAAAAAGLPVSALA) form a signal peptide, tat-type signal. Residues 41-97 (IRWSKAPCRFCGTGCGVMVGTRDGQVVATHGDTQAEVNRGLNCVKGYFLSKIMYGED) enclose the 4Fe-4S Mo/W bis-MGD-type domain. Positions 48, 51, 55, and 83 each coordinate [4Fe-4S] cluster. Mo-bis(molybdopterin guanine dinucleotide) contacts are provided by residues Lys-85, Gln-152, Asn-177, Cys-181, 214–221 (WGSNMAEM), 245–249 (STFTH), 264–266 (GTD), Met-375, Gln-379, Asn-485, 511–512 (SD), Lys-534, Asp-561, and 721–730 (TGRVLEHWHS). Trp-797 lines the substrate pocket. Mo-bis(molybdopterin guanine dinucleotide) is bound by residues Asn-805 and Lys-822.

It belongs to the prokaryotic molybdopterin-containing oxidoreductase family. NasA/NapA/NarB subfamily. In terms of assembly, component of the periplasmic nitrate reductase NapAB complex composed of NapA and NapB. It depends on [4Fe-4S] cluster as a cofactor. Mo-bis(molybdopterin guanine dinucleotide) is required as a cofactor. Post-translationally, predicted to be exported by the Tat system. The position of the signal peptide cleavage has not been experimentally proven.

It is found in the periplasm. The enzyme catalyses 2 Fe(II)-[cytochrome] + nitrate + 2 H(+) = 2 Fe(III)-[cytochrome] + nitrite + H2O. In terms of biological role, catalytic subunit of the periplasmic nitrate reductase complex NapAB. Receives electrons from NapB and catalyzes the reduction of nitrate to nitrite. This chain is Periplasmic nitrate reductase, found in Cereibacter sphaeroides (strain ATCC 17023 / DSM 158 / JCM 6121 / CCUG 31486 / LMG 2827 / NBRC 12203 / NCIMB 8253 / ATH 2.4.1.) (Rhodobacter sphaeroides).